A 321-amino-acid chain; its full sequence is Glucokinase (321 aa).

8-13 (GDVGGT) contributes to the ATP binding site.

It belongs to the bacterial glucokinase family.

It localises to the cytoplasm. The enzyme catalyses D-glucose + ATP = D-glucose 6-phosphate + ADP + H(+). This Salmonella agona (strain SL483) protein is Glucokinase.